We begin with the raw amino-acid sequence, 296 residues long: AUGMIN subunit 2 (296 aa).

Coiled-coil stretches lie at residues Asp-56–Lys-83 and Ala-253–Leu-285. Positions Ala-218 to Val-296 are disordered. Over residues Gln-264–Gly-277 the composition is skewed to acidic residues.

Belongs to the HAUS2 family. As to quaternary structure, part of the augmin complex composed of 8 subunits. The complex acts on microtubules and interacts with gamma-tubulin in spindles and the phragmoplast.

Contributes to the assembly of the acentrosomal spindle and phragmoplast microtubule arrays as part of the augmin complex. The chain is AUGMIN subunit 2 from Arabidopsis thaliana (Mouse-ear cress).